A 775-amino-acid chain; its full sequence is MTEPDVEISSVLTGEDTLVLASMDTPAEIELVMDWLCQQRNRNPDIKFDVLKLPSRNLAPAALTALVEQLESDEDRSVVPVRVFWMPPAERSKLAKLAGLLPGRDPYHPNRRQQRHILKTDARRALVIAGDSAKVSELRQYWRDTTVGENECDFAQFVTRRAILAMERAESRILGPQYKSPRLVKPEILASTRFRAGLEKISGATVEEAGKMLDELATGWSRASVDLVSVLGRMLSRGFEPEIDYDEYQVAAMRAALEAHPAVLLFSHRSYIDGAVVPVAMQENRLPPVHVFAGINLSFGLMGPLLRRSGVIFIRRNIGDNPLYKYVLREYVGYIVEKRFNLSWSIEGTRSRTGKMLPPKLGLLTYVADAYLDGRSEDILLQPVSISFDQLHETAEYAAYARGGEKTPEGVAWLYSFIKAQGERNYGKIYVRFPEAVSMRQYLGAPHGALVQDQDAKRLALQKMSFEVAWRILCATPVTATALVSALLLTTRGVALTLDQLHHTLQESLDYLERKQTPVSKSALRLRSREGVRAAVDALSSGHPITRVDSGREPVWYITPGNEHAAAFYRNSVIHAFLETSIVELALAHARHVEGDRMKVFWAQAMRLRDLLKFDFYFADSAAFRANIAEEIAWHQNWEDRVSGDGDDIDAMLLTKRPLISDAMLRVFFEAYDIVADVLRDAPADVGQKELTELALGVGRQYVAQGRVRSGESVSTLLFATAYQVVVDQNLIAPAPDLAERRMVFRRELRDIRRDFDYVEQIARSRFIVREFKSR.

Positions 268-273 (HRSYID) match the HXXXXD motif motif.

The protein belongs to the GPAT/DAPAT family.

The protein localises to the cell membrane. The enzyme catalyses sn-glycerol 3-phosphate + an acyl-CoA = a 1-acyl-sn-glycero-3-phosphate + CoA. It functions in the pathway phospholipid metabolism; CDP-diacylglycerol biosynthesis; CDP-diacylglycerol from sn-glycerol 3-phosphate: step 1/3. The sequence is that of Glycerol-3-phosphate acyltransferase (plsB) from Mycobacterium leprae (strain TN).